The primary structure comprises 462 residues: Zinc transporter 6-B (462 aa).

The Cytoplasmic segment spans residues 1–33 (MGTIYLFRKTQRSLLGKLTQEFRLVTADRRSWK). Residues 34-54 (ILLFGAINVVCTGFLLTWCSS) traverse the membrane as a helical segment. Residues 55-64 (TNSMALTAYT) lie on the Extracellular side of the membrane. The chain crosses the membrane as a helical span at residues 65-85 (YLTIFDLFSLITSLISYWVMM). At 86–98 (KKPSPTYSFGFER) the chain is on the cytoplasmic side. Residues 99–119 (LEVLAVFASTVLAQLGALFIL) traverse the membrane as a helical segment. Residues 120 to 134 (KESAERFLEQPEIHT) are Extracellular-facing. A helical transmembrane segment spans residues 135 to 155 (GRLLVGTFVALFFNLFTMLSI). Residues 156–200 (RNKPFAYVSEAASTSWLQEHVADLSRSLCGVIPGLSSIFLPRMNP) lie on the Cytoplasmic side of the membrane. The chain crosses the membrane as a helical span at residues 201–221 (FVLIDIAGALALCITYMLIEI). Topologically, residues 222-223 (NN) are extracellular. The chain crosses the membrane as a helical span at residues 224–244 (YFAVDTASAIAIAVMTFGTMY). At 245–462 (PMSVYSGKVL…TPGQFTQFRQ (218 aa)) the chain is on the cytoplasmic side.

Belongs to the cation diffusion facilitator (CDF) transporter (TC 2.A.4) family. SLC30A subfamily. In terms of assembly, heterodimer with SLC30A5; form a functional zinc ion transmembrane transporter.

It is found in the golgi apparatus. It localises to the trans-Golgi network membrane. Has probably no intrinsic transporter activity but together with SLC30A5 forms a functional zinc ion:proton antiporter heterodimer, mediating zinc entry into the lumen of organelles along the secretory pathway. As part of that zinc ion:proton antiporter, contributes to zinc ion homeostasis within the early secretory pathway and regulates the activation and folding of enzymes like alkaline phosphatases and enzymes involved in phosphatidylinositol glycan anchor biosynthesis. In Xenopus laevis (African clawed frog), this protein is Zinc transporter 6-B (slc30a6-b).